Reading from the N-terminus, the 200-residue chain is Dephospho-CoA kinase (200 aa).

One can recognise a DPCK domain in the interval Lys3–Arg200. Gly11 to Ser16 contacts ATP.

This sequence belongs to the CoaE family.

The protein resides in the cytoplasm. It carries out the reaction 3'-dephospho-CoA + ATP = ADP + CoA + H(+). It functions in the pathway cofactor biosynthesis; coenzyme A biosynthesis; CoA from (R)-pantothenate: step 5/5. Catalyzes the phosphorylation of the 3'-hydroxyl group of dephosphocoenzyme A to form coenzyme A. The chain is Dephospho-CoA kinase from Thermobifida fusca (strain YX).